The sequence spans 248 residues: Granulin (248 aa).

It belongs to the polyhedrin family.

Its function is as follows. Component of the virus occlusion bodies, which are large proteinaceous structures, that protect the virus from the outside environment for extended periods until they are ingested by insect larvae. This is Granulin from Cydia pomonella (Codling moth).